We begin with the raw amino-acid sequence, 78 residues long: Serine rich endogenous peptide 12 (78 aa).

Residues 1–24 (MRNTISSKMGQVLIVLLLLCTVLC) form the signal peptide. Positions 25 to 43 (RTESALPSGQHSVLLTGRR) are cleaved as a propeptide — removed in mature form. Residues 47–78 (SGASGPVRSSQSSQAGGRFNDADPIAIDYGKY) are disordered. An SCOOP motif motif is present at residues 50-64 (SGPVRSSQSSQAGGR). Positions 56 to 58 (SQS) match the SxS motif essential for MIK2 binding motif.

The protein belongs to the serine rich endogenous peptide (SCOOP) phytocytokine family. Interacts with MIK2 (via extracellular leucine-rich repeat domain); this interaction triggers the formation of complex between MIK2 and the BAK1/SERK3 and SERK4 coreceptors, and subsequent BAK1 activation by phosphorylation on 'Ser-612'. In terms of tissue distribution, mostly expressed in the whole root system, and, to a lower extent, in seedlings shoots.

It is found in the cell membrane. Its subcellular location is the secreted. The protein resides in the extracellular space. The protein localises to the apoplast. Brassicaceae-specific phytocytokine (plant endogenous peptide released into the apoplast) perceived by MIK2 in a BAK1/SERK3 and SERK4 coreceptors-dependent manner, that modulates various physiological and antimicrobial processes including root growth prevention, phospholipid signaling pathway activation (e.g. accumulation of phosphatidic acid (PA), but transient reduction of phosphatidylinositol 4,5-bisphosphate (PIP(2)) levels) and reactive oxygen species (ROS) response regulation. Moderates primary root growth, and regulates root meristems and cell elongation; this root growth regulation is associated with the modulation of ROS metabolism and alteration of cell wall structure, and depends on variations in many genes expression. Promotes ROS (e.g. superoxide anion O(2) and hydrogen peroxide H(2)O(2)) production and MAPK (e.g. MPK3, MPK4 and MPK6) activation in a MIK2-dependent manner, thus leading to the up-regulation of immune-related marker genes (e.g. WRKY30, WRKY33 and CYP81F2). Involved in biotic and oxidative stress responses; acts as a negative regulator of defense against necrotrophic pathogens such as the bacteria Erwinia amylovora and the fungus Alternaria brassicicola. Able to prime defense responses against the pathogenic bacteria Pseudomonas syringae pv. tomato DC3000. Contributes to the triggering of defense responses toward generalist herbivores such as Spodoptera littoralis, probably via the activation of jasmonate and indole glucosinolate biosynthesis. Triggers the expression of several PROSCOOP genes (e.g. PROSCOOP3, PROSCOOP7, PROSCOOP12 and PROSCOOP13). In Arabidopsis thaliana (Mouse-ear cress), this protein is Serine rich endogenous peptide 12.